Consider the following 317-residue polypeptide: Gluconeogenesis factor (317 aa).

Belongs to the gluconeogenesis factor family.

It is found in the cytoplasm. Required for morphogenesis under gluconeogenic growth conditions. Required, in gluconeogenic growth conditions, for the correct localization of PBP1 and hence for displaying a normal rod shape. In Bacillus subtilis (strain 168), this protein is Gluconeogenesis factor (mgfK).